A 276-amino-acid chain; its full sequence is Undecaprenyl-diphosphatase (276 aa).

A run of 8 helical transmembrane segments spans residues 2-22, 43-63, 83-103, 111-131, 147-167, 186-206, 224-244, and 255-275; these read LEILKAVILGIVEGITEFLPI, FIDMFNVVIQLGAIMAVVVLY, WTLWKKVIIAVIPSVIIGLPL, LMNWLVVSIALIVYGVLFIVI, TLPYKVAILIGCFQILSLIPG, YVAAEFSFFLAIPTMFGASLL, LILAVGVIVSFVVAYASIRFL, and AFGWYRIILGVIVIAYFALLA.

Belongs to the UppP family.

The protein localises to the cell membrane. It carries out the reaction di-trans,octa-cis-undecaprenyl diphosphate + H2O = di-trans,octa-cis-undecaprenyl phosphate + phosphate + H(+). Catalyzes the dephosphorylation of undecaprenyl diphosphate (UPP). Confers resistance to bacitracin. This Limosilactobacillus fermentum (strain NBRC 3956 / LMG 18251) (Lactobacillus fermentum) protein is Undecaprenyl-diphosphatase.